We begin with the raw amino-acid sequence, 97 residues long: Sperm protein associated with the nucleus on the X chromosome A (97 aa).

Positions 1–49 (MDKQSSAGGVKRSVPCDSNEANEMMPETPTGDSDPQPAPKKMKTSESST) are disordered. Positions 37-45 (PAPKKMKTS) match the Nuclear localization signal motif.

The protein belongs to the SPAN-X family. As to expression, detected in testis and sperm.

It localises to the cytoplasm. The protein localises to the nucleus. This Homo sapiens (Human) protein is Sperm protein associated with the nucleus on the X chromosome A.